A 1057-amino-acid polypeptide reads, in one-letter code: MKKVGTGQKRNRSIFRFSTLAFAIHAVSMGGLVVLPMQQAYAQTAGVKSYNIPAGRLANVLNQFAEQSGTSIAMDAQQLQGLHSLGLKGNFAVEQGFEQLLKSTEFNAVKVGQGYTLSKKSTPRVISSKVQATSLPPSSAVIEEDASVRLTPIVVYGKEDRDTEGYNKVYDANRSSVYAGKDYVERFKGTNPADVLQGMVGVYSGDARNSGALDPSVRGVQGVGRVPLTIDGTEQSIAVWRGYNGVNNRNYIDPNLIAGIEVIKGPSLERNTTTSVGGAVVVKTLEADDIVRPGKSFGAELKVEGSTNSIDPSLPDMSKVGQNYDDTTPWIDMNGSKYDPDIYKKNRTRSDNSHFSGDDLAGRLAIATKQDKFDLLAVYAVRERGNYFSGTHGAGYYKRATPDSSLDFIPYFAYAYQPGDEVPNTSSHMESWLLKGTYRPTDDQTLKLTYRDTKNIFGEIMPSRIVWGITPDLGVPQWPLSNIHSKAYSLEYKFKPENNRWIDFYANIWQTDTESQTYTRGGWPTTIDFRDNTIINTAISHSDNTRKGITVSNKTRLLDQLDLTLGGSFLKEKLTSDDVYGEFGPSYSLYQALPRAGRREEKTFDFNFNYRPVSWLSFDAGMRYRSYWAIDDFLNKSLQSEIDPSLNPLFTKKSRLKEYTFEYQTMPESYTSTQQRLINVLKQRYATKNPEWDGQLDTVPASESTLYNMIWSQKNTLSWKADANGQLSLADNPLNQLNASGQKYVVTGGNFMSVVDQVPVESADKVKDSGWAPQLGASIHLTPNSRIYARYAEEYRLPSLFESTVGFSAMLQYQAIKPEHAFNYEVGYVYDMRDWFSTARNADIKLAYYYNKTKNVIERDQNLIFTNMDEQKLSGLELQSRFDNGGFFTDLSVAYNLKNEVCDTNSAINKMILGGTVQTEQGLEFREPYQRCVDDGFPNGYLVTMATPELSFHGLLGARFFDEKLELGARATFYKAYESPLRKNNDASVNKGYYLNVPLAWDDTWIFDAYARYQVDDYNTVEFVGSNLSNQFYIDPLTRSAMAAPGRTMKISWTTKF.

Residues 168–285 (KVYDANRSSV…VGGAVVVKTL (118 aa)) enclose the TBDR plug domain. The region spanning 296–1057 (SFGAELKVEG…TMKISWTTKF (762 aa)) is the TBDR beta-barrel domain.

The protein belongs to the TonB-dependent receptor family.

It is found in the cell outer membrane. Functionally, part of a high affinity heme acquisition system. Functions as a gateway for heme entry into the bacterial cell, enabling growth on hemoprotein sources. Can acquire heme directly from hemoprotein reservoirs, however, HphA likely enhances the efficiency of this process by delivering heme to HphR. Is essential for virulence, bacterial dissemination and growth in the blood. This Acinetobacter baumannii protein is Hemophilin receptor.